The following is a 300-amino-acid chain: Cation-efflux pump FieF (300 aa).

4 consecutive transmembrane segments (helical) span residues 12–32 (AALA…VAWY), 40–60 (LAAL…LLVV), 82–102 (AALA…LTGF), and 114–134 (PGVG…LVTY). Zn(2+) is bound by residues D45 and D49. The Zn(2+) site is built by H153 and D157. 2 consecutive transmembrane segments (helical) span residues 155–175 (QSDV…WYGF) and 178–198 (ADAL…LRMG).

This sequence belongs to the cation diffusion facilitator (CDF) transporter (TC 2.A.4) family. FieF subfamily. As to quaternary structure, homodimer.

It is found in the cell inner membrane. The catalysed reaction is Zn(2+)(in) + H(+)(out) = Zn(2+)(out) + H(+)(in). It catalyses the reaction Cd(2+)(in) + H(+)(out) = Cd(2+)(out) + H(+)(in). It carries out the reaction Fe(2+)(in) + H(+)(out) = Fe(2+)(out) + H(+)(in). Its function is as follows. Divalent metal cation transporter which exports Zn(2+), Cd(2+) and possibly Fe(2+). May be involved in zinc and iron detoxification by efflux. This Serratia proteamaculans (strain 568) protein is Cation-efflux pump FieF.